A 500-amino-acid chain; its full sequence is Lysine--tRNA ligase (500 aa).

Mg(2+)-binding residues include Glu410 and Glu417.

It belongs to the class-II aminoacyl-tRNA synthetase family. Homodimer. It depends on Mg(2+) as a cofactor.

The protein localises to the cytoplasm. The catalysed reaction is tRNA(Lys) + L-lysine + ATP = L-lysyl-tRNA(Lys) + AMP + diphosphate. This chain is Lysine--tRNA ligase, found in Shewanella oneidensis (strain ATCC 700550 / JCM 31522 / CIP 106686 / LMG 19005 / NCIMB 14063 / MR-1).